The primary structure comprises 215 residues: Cytochrome b6 (215 aa).

The helical transmembrane segment at 32–52 (IFYCLGGITLTCFIIQVATGF) threads the bilayer. Cysteine 35 contributes to the heme c binding site. Heme b is bound by residues histidine 86 and histidine 100. 3 helical membrane-spanning segments follow: residues 90–110 (ASMM…TGGF), 116–136 (LTWV…VTGY), and 186–206 (LHTF…FLMI). Heme b is bound by residues histidine 187 and histidine 202.

It belongs to the cytochrome b family. PetB subfamily. The 4 large subunits of the cytochrome b6-f complex are cytochrome b6, subunit IV (17 kDa polypeptide, PetD), cytochrome f and the Rieske protein, while the 4 small subunits are PetG, PetL, PetM and PetN. The complex functions as a dimer. Requires heme b as cofactor. Heme c is required as a cofactor.

The protein resides in the plastid. It localises to the chloroplast thylakoid membrane. In terms of biological role, component of the cytochrome b6-f complex, which mediates electron transfer between photosystem II (PSII) and photosystem I (PSI), cyclic electron flow around PSI, and state transitions. This chain is Cytochrome b6, found in Zygnema circumcarinatum (Green alga).